We begin with the raw amino-acid sequence, 66 residues long: uncharacterized protein (66 aa).

2 helical membrane-spanning segments follow: residues 4-24 and 38-58; these read ALFI…LLIF and LLTP…ILVL.

Its subcellular location is the membrane. This is an uncharacterized protein from Saccharomyces cerevisiae (strain ATCC 204508 / S288c) (Baker's yeast).